Reading from the N-terminus, the 554-residue chain is Phosphoglucomutase (554 aa).

Residue Arg21 coordinates alpha-D-glucose 1,6-bisphosphate. Phosphothreonine is present on Thr111. Ser113 serves as a coordination point for alpha-D-glucose 1,6-bisphosphate. Catalysis depends on Ser113, which acts as the Phosphoserine intermediate. 4 residues coordinate Mg(2+): Ser113, Asp278, Asp280, and Asp282. Ser113 bears the Phosphoserine mark. The alpha-D-glucose 1,6-bisphosphate site is built by Asp282, Arg283, Thr346, Glu365, Ser367, and Lys378.

The protein belongs to the phosphohexose mutase family. As to quaternary structure, monomer. Requires Mg(2+) as cofactor.

The protein resides in the cytoplasm. Its subcellular location is the nucleus. The enzyme catalyses alpha-D-glucose 1-phosphate = alpha-D-glucose 6-phosphate. It catalyses the reaction O-phospho-L-seryl-[protein] + alpha-D-glucose 1-phosphate = alpha-D-glucose 1,6-bisphosphate + L-seryl-[protein]. It carries out the reaction alpha-D-glucose 1,6-bisphosphate + L-seryl-[protein] = O-phospho-L-seryl-[protein] + alpha-D-glucose 6-phosphate. Its function is as follows. Catalyzes the reversible isomerization of alpha-D-glucose 1-phosphate to alpha-D-glucose 6-phosphate. The mechanism proceeds via the intermediate compound alpha-D-glucose 1,6-bisphosphate. Key enzyme in hexose metabolism. The reverse reaction is an essential step for biosynthesis because glucose 1-phosphate is the starting point for the synthesis of UDP-glucose, which acts as a precursor for the synthesis of oligosaccharides and trehalose. In Schizosaccharomyces pombe (strain 972 / ATCC 24843) (Fission yeast), this protein is Phosphoglucomutase.